The primary structure comprises 301 residues: MTTQLTHLQQLEAESIHIIREVVAEFDNPVMLYSIGKDSAVMLHLARKAFYPAPPPFPLLHVDTTWKFREMIQFRGRMAKESGMELLVHVNEDGVKRGVSPFTHGSALYTDVMKTEGLKQALDHYKFDAAFGGARRDEEKSRAKERIFSFRSANHRWDPKNQRPELWSLYNTRIKPGESIRVFPLSNWTELDIWQYIHLEQIPIVPLYYAAVRPVVERDGMLIMVDDDRLELKPGEKVEQKSVRFRTLGCYPLTGAVESEADTLPEIIQEMLLTRTSERQGRLIDHDQAGSMEKKKQEGYF.

This sequence belongs to the PAPS reductase family. CysD subfamily. Heterodimer composed of CysD, the smaller subunit, and CysN.

The catalysed reaction is sulfate + ATP + H(+) = adenosine 5'-phosphosulfate + diphosphate. The protein operates within sulfur metabolism; hydrogen sulfide biosynthesis; sulfite from sulfate: step 1/3. With CysN forms the ATP sulfurylase (ATPS) that catalyzes the adenylation of sulfate producing adenosine 5'-phosphosulfate (APS) and diphosphate, the first enzymatic step in sulfur assimilation pathway. APS synthesis involves the formation of a high-energy phosphoric-sulfuric acid anhydride bond driven by GTP hydrolysis by CysN coupled to ATP hydrolysis by CysD. The polypeptide is Sulfate adenylyltransferase subunit 2 (Citrifermentans bemidjiense (strain ATCC BAA-1014 / DSM 16622 / JCM 12645 / Bem) (Geobacter bemidjiensis)).